Consider the following 106-residue polypeptide: Protein RnfH (106 aa).

This sequence belongs to the UPF0125 (RnfH) family.

This is Protein RnfH from Ectopseudomonas mendocina (strain ymp) (Pseudomonas mendocina).